A 37-amino-acid polypeptide reads, in one-letter code: U4-theraphotoxin-Hhn1v (37 aa).

3 disulfide bridges follow: cysteine 3–cysteine 17, cysteine 7–cysteine 28, and cysteine 22–cysteine 33.

The protein belongs to the neurotoxin 12 (Hwtx-2) family. 02 (Hwtx-2) subfamily. In terms of tissue distribution, expressed by the venom gland.

It localises to the secreted. In terms of biological role, postsynaptic neurotoxin. The protein is U4-theraphotoxin-Hhn1v of Cyriopagopus hainanus (Chinese bird spider).